The following is a 423-amino-acid chain: Histidine--tRNA ligase 2 (423 aa).

It belongs to the class-II aminoacyl-tRNA synthetase family. As to quaternary structure, homodimer.

Its subcellular location is the cytoplasm. It catalyses the reaction tRNA(His) + L-histidine + ATP = L-histidyl-tRNA(His) + AMP + diphosphate + H(+). In Bacillus anthracis, this protein is Histidine--tRNA ligase 2.